The primary structure comprises 230 residues: Ribose-5-phosphate isomerase A (230 aa).

Residues threonine 29–threonine 32, aspartate 85–aspartate 88, and lysine 99–glycine 102 contribute to the substrate site. Glutamate 108 acts as the Proton acceptor in catalysis. Substrate is bound at residue lysine 126.

This sequence belongs to the ribose 5-phosphate isomerase family. In terms of assembly, homodimer.

The enzyme catalyses aldehydo-D-ribose 5-phosphate = D-ribulose 5-phosphate. Its pathway is carbohydrate degradation; pentose phosphate pathway; D-ribose 5-phosphate from D-ribulose 5-phosphate (non-oxidative stage): step 1/1. Its function is as follows. Catalyzes the reversible conversion of ribose-5-phosphate to ribulose 5-phosphate. This chain is Ribose-5-phosphate isomerase A, found in Synechococcus sp. (strain JA-3-3Ab) (Cyanobacteria bacterium Yellowstone A-Prime).